The sequence spans 279 residues: Thermitase (279 aa).

Asp5 serves as a coordination point for Ca(2+). The Peptidase S8 domain occupies 12-277; the sequence is QYGPQKIQAP…KGRVNAYKAV (266 aa). The Charge relay system role is filled by Asp38. Residues Asp47, Asp57, Asp60, Asp62, Thr64, and Gln66 each coordinate Ca(2+). The Charge relay system role is filled by His71. The Ca(2+) site is built by Val82, Asn85, Thr87, and Ile89. Na(+)-binding residues include Ala173, Tyr175, and Ala178. Ca(2+) contacts are provided by Val199 and Asp201. A Na(+)-binding site is contributed by Asp201. Catalysis depends on Ser225, which acts as the Charge relay system.

Belongs to the peptidase S8 family. Ca(2+) serves as cofactor. Na(+) is required as a cofactor.

It is found in the secreted. The enzyme catalyses Hydrolysis of proteins, including collagen.. This Thermoactinomyces vulgaris protein is Thermitase.